The following is a 432-amino-acid chain: uncharacterized protein (432 aa).

The segment covering 1 to 18 (MAIGDKRKKNRKNKQNKK) has biased composition (basic residues). 3 disordered regions span residues 1-23 (MAIG…KNDN), 37-56 (NSNS…NGNG), and 122-168 (STNS…GSSL). 3 stretches are compositionally biased toward low complexity: residues 37–53 (NSNS…NNKN), 122–147 (STNS…QQQQ), and 154–168 (ESQS…GSSL). Residues 181-226 (LNDQLKIVQLEQKIVNLEKEIQRMRNEQNQIHKQNLNQYHELLKQI) are a coiled coil. Disordered regions lie at residues 270 to 290 (VQPV…KSNG) and 310 to 432 (SSKF…STLR). Residues 274–288 (STPSSSSNSLASKKS) are compositionally biased toward low complexity. Residues 311–324 (SKFAQSNSSPSRVN) are compositionally biased toward polar residues. The segment covering 352 to 378 (KKSATTTTTSSSSNNATTTTAKGSTST) has biased composition (low complexity). A compositionally biased stretch (polar residues) spans 383–414 (ITNSNNIKNSVLSPKSITKPNTPSNIIFSPLS).

This is an uncharacterized protein from Dictyostelium discoideum (Social amoeba).